The sequence spans 246 residues: uncharacterized protein (246 aa).

Residues 204 to 243 are a coiled coil; that stretch reads TTKLKKLEKEIHELPYMLINGKITYEEYKKRIREIEKEIG.

This is an uncharacterized protein from Aquifex aeolicus (strain VF5).